Consider the following 377-residue polypeptide: Dehydrogenase/reductase SDR family member 13 (377 aa).

Residues 1–25 (MEALLLGVGLLLGAYVLVYYNLVKA) form the signal peptide. Positions 46 and 48 each coordinate NAD(+). Position 170 (Ser-170) interacts with substrate. NAD(+) is bound by residues Tyr-197, Lys-201, and Ser-232. The active-site Proton acceptor is the Tyr-197. Residues 310 to 363 (LAGLGPGEDAESDEDSQPEDPGTPSSPSSPHPEEPTVSELYPSPQSSTDRSTVT) are disordered. Residues 317–327 (EDAESDEDSQP) are compositionally biased toward acidic residues. Positions 328 to 337 (EDPGTPSSPS) are enriched in low complexity. Polar residues predominate over residues 352–363 (SPQSSTDRSTVT).

It belongs to the short-chain dehydrogenases/reductases (SDR) family.

It is found in the secreted. Putative oxidoreductase. This is Dehydrogenase/reductase SDR family member 13 (DHRS13) from Bos taurus (Bovine).